A 317-amino-acid polypeptide reads, in one-letter code: Ribosomal protein L11 methyltransferase (317 aa).

4 residues coordinate S-adenosyl-L-methionine: Thr139, Gly162, Asp184, and Asn226. Residues 274-297 form a disordered region; it reads EHVATRPDPASPGGDRRAGRGDAG.

The protein belongs to the methyltransferase superfamily. PrmA family.

The protein localises to the cytoplasm. The enzyme catalyses L-lysyl-[protein] + 3 S-adenosyl-L-methionine = N(6),N(6),N(6)-trimethyl-L-lysyl-[protein] + 3 S-adenosyl-L-homocysteine + 3 H(+). In terms of biological role, methylates ribosomal protein L11. This is Ribosomal protein L11 methyltransferase from Sorangium cellulosum (strain So ce56) (Polyangium cellulosum (strain So ce56)).